Consider the following 264-residue polypeptide: Adenosylcobinamide-GDP ribazoletransferase (264 aa).

7 helical membrane-spanning segments follow: residues 10–30 (LFFIALQFFTRVPVPAWVGYT), 43–63 (LVGAWVGGVAALVLWLAAQVW), 113–133 (LGSYGALGLVGVLGLKAVALY), 141–161 (VQALIALVWAHAVSRAVPVAL), 183–203 (VSDAGLAAALGWAALACAAAW), 205–225 (LGASAFTLACAALGVIALAAF), and 243–263 (GAAQQLCELAAYLGWLAGVWF).

This sequence belongs to the CobS family. It depends on Mg(2+) as a cofactor.

It is found in the cell inner membrane. The enzyme catalyses alpha-ribazole + adenosylcob(III)inamide-GDP = adenosylcob(III)alamin + GMP + H(+). It catalyses the reaction alpha-ribazole 5'-phosphate + adenosylcob(III)inamide-GDP = adenosylcob(III)alamin 5'-phosphate + GMP + H(+). The protein operates within cofactor biosynthesis; adenosylcobalamin biosynthesis; adenosylcobalamin from cob(II)yrinate a,c-diamide: step 7/7. In terms of biological role, joins adenosylcobinamide-GDP and alpha-ribazole to generate adenosylcobalamin (Ado-cobalamin). Also synthesizes adenosylcobalamin 5'-phosphate from adenosylcobinamide-GDP and alpha-ribazole 5'-phosphate. The protein is Adenosylcobinamide-GDP ribazoletransferase of Leptothrix cholodnii (strain ATCC 51168 / LMG 8142 / SP-6) (Leptothrix discophora (strain SP-6)).